The sequence spans 1140 residues: Probable DNA-directed RNA polymerase II subunit RPB2 homolog (1140 aa).

Residue Asp-773 coordinates Mg(2+). Residues Cys-1092, Cys-1095, Cys-1105, and Cys-1108 each coordinate Zn(2+). A C4-type zinc finger spans residues 1092-1108 (CKDCGMMSSTSKKCHHC).

It belongs to the RNA polymerase beta chain family.

It carries out the reaction RNA(n) + a ribonucleoside 5'-triphosphate = RNA(n+1) + diphosphate. Component of the DNA-dependent RNA polymerase that catalyzes the transcription of DNA into RNA using the four ribonucleoside triphosphates as substrates. Second largest component of RNA polymerase II which synthesizes mRNA precursors and many functional non-coding RNAs. Proposed to contribute to the polymerase catalytic activity and forms the polymerase active center together with the largest subunit. This Invertebrate iridescent virus 3 (IIV-3) protein is Probable DNA-directed RNA polymerase II subunit RPB2 homolog.